We begin with the raw amino-acid sequence, 691 residues long: Dipeptidyl peptidase 3 (691 aa).

Residue His-431 coordinates Zn(2+). Glu-432 is an active-site residue. Zn(2+)-binding residues include His-436 and Glu-492.

Belongs to the peptidase M49 family. Zn(2+) is required as a cofactor.

The protein localises to the cytoplasm. It carries out the reaction Release of an N-terminal dipeptide from a peptide comprising four or more residues, with broad specificity. Also acts on dipeptidyl 2-naphthylamides.. This chain is Dipeptidyl peptidase 3 (dpp3-1), found in Dictyostelium discoideum (Social amoeba).